The primary structure comprises 203 residues: ATP-dependent Clp protease proteolytic subunit (203 aa).

S107 functions as the Nucleophile in the catalytic mechanism. H132 is an active-site residue.

Belongs to the peptidase S14 family. In terms of assembly, fourteen ClpP subunits assemble into 2 heptameric rings which stack back to back to give a disk-like structure with a central cavity, resembling the structure of eukaryotic proteasomes.

The protein resides in the cytoplasm. The enzyme catalyses Hydrolysis of proteins to small peptides in the presence of ATP and magnesium. alpha-casein is the usual test substrate. In the absence of ATP, only oligopeptides shorter than five residues are hydrolyzed (such as succinyl-Leu-Tyr-|-NHMec, and Leu-Tyr-Leu-|-Tyr-Trp, in which cleavage of the -Tyr-|-Leu- and -Tyr-|-Trp bonds also occurs).. Its function is as follows. Cleaves peptides in various proteins in a process that requires ATP hydrolysis. Has a chymotrypsin-like activity. Plays a major role in the degradation of misfolded proteins. The sequence is that of ATP-dependent Clp protease proteolytic subunit from Shewanella sediminis (strain HAW-EB3).